A 177-amino-acid chain; its full sequence is Negative modulator of initiation of replication (177 aa).

Belongs to the SeqA family. In terms of assembly, homodimer. Polymerizes to form helical filaments.

It localises to the cytoplasm. In terms of biological role, negative regulator of replication initiation, which contributes to regulation of DNA replication and ensures that replication initiation occurs exactly once per chromosome per cell cycle. Binds to pairs of hemimethylated GATC sequences in the oriC region, thus preventing assembly of replication proteins and re-initiation at newly replicated origins. Repression is relieved when the region becomes fully methylated. The polypeptide is Negative modulator of initiation of replication (Vibrio cholerae serotype O1 (strain ATCC 39315 / El Tor Inaba N16961)).